Reading from the N-terminus, the 338-residue chain is Mycothiol acetyltransferase (338 aa).

2 N-acetyltransferase domains span residues 29–173 (PETY…HQLP) and 181–338 (ISLR…NKFQ). D55 provides a ligand contact to 1D-myo-inositol 2-(L-cysteinylamino)-2-deoxy-alpha-D-glucopyranoside. Acetyl-CoA is bound at residue 105–107 (LVV). 1D-myo-inositol 2-(L-cysteinylamino)-2-deoxy-alpha-D-glucopyranoside contacts are provided by E208, K248, and E261. Acetyl-CoA-binding positions include 265-267 (VGI) and 272-278 (QGKGLGK). Y299 is a binding site for 1D-myo-inositol 2-(L-cysteinylamino)-2-deoxy-alpha-D-glucopyranoside.

The protein belongs to the acetyltransferase family. MshD subfamily. Monomer.

The catalysed reaction is 1D-myo-inositol 2-(L-cysteinylamino)-2-deoxy-alpha-D-glucopyranoside + acetyl-CoA = mycothiol + CoA + H(+). Its function is as follows. Catalyzes the transfer of acetyl from acetyl-CoA to desacetylmycothiol (Cys-GlcN-Ins) to form mycothiol. The sequence is that of Mycothiol acetyltransferase from Renibacterium salmoninarum (strain ATCC 33209 / DSM 20767 / JCM 11484 / NBRC 15589 / NCIMB 2235).